Consider the following 202-residue polypeptide: NAD(P)H-quinone oxidoreductase chain 6 (202 aa).

5 helical membrane-spanning segments follow: residues 9–29 (VVSF…VVLA), 32–52 (IVYS…MYLL), 61–81 (AQVL…IMLV), 98–118 (VLTA…VLAT), and 144–164 (FLLP…GAII).

It belongs to the complex I subunit 6 family.

It is found in the membrane. The enzyme catalyses a plastoquinone + NADH + (n+1) H(+)(in) = a plastoquinol + NAD(+) + n H(+)(out). It carries out the reaction a plastoquinone + NADPH + (n+1) H(+)(in) = a plastoquinol + NADP(+) + n H(+)(out). NDH-1 shuttles electrons from NAD(P)H, via FMN and iron-sulfur (Fe-S) centers, to quinones in the respiratory chain. The immediate electron acceptor for the enzyme in this species is believed to be plastoquinone. Couples the redox reaction to proton translocation (for every two electrons transferred, four hydrogen ions are translocated across the cytoplasmic membrane), and thus conserves the redox energy in a proton gradient. In Nostoc sp. (strain PCC 7120 / SAG 25.82 / UTEX 2576), this protein is NAD(P)H-quinone oxidoreductase chain 6 (ndhG).